Here is a 272-residue protein sequence, read N- to C-terminus: Probable ribonuclease HI_0526 (272 aa).

The N-terminal stretch at 1–23 (MKKLTSILSLIVLVILAIWQYFT) is a signal peptide. Active-site residues include H148, E195, and H199.

This sequence belongs to the RNase T2 family.

This Haemophilus influenzae (strain ATCC 51907 / DSM 11121 / KW20 / Rd) protein is Probable ribonuclease HI_0526.